The chain runs to 263 residues: tRNA uridine(34) hydroxylase (263 aa).

The 95-residue stretch at 129-223 folds into the Rhodanese domain; it reads EGREIALLDT…YFEEVGGAHY (95 aa). C183 functions as the Cysteine persulfide intermediate in the catalytic mechanism.

It belongs to the TrhO family.

The catalysed reaction is uridine(34) in tRNA + AH2 + O2 = 5-hydroxyuridine(34) in tRNA + A + H2O. Its function is as follows. Catalyzes oxygen-dependent 5-hydroxyuridine (ho5U) modification at position 34 in tRNAs. This chain is tRNA uridine(34) hydroxylase, found in Variovorax paradoxus (strain S110).